The following is a 184-amino-acid chain: Putative manganese efflux pump MntP (184 aa).

6 consecutive transmembrane segments (helical) span residues 12–32 (SIMA…MGMI), 39–59 (IIYI…FGML), 63–83 (LLSG…LLVL), 99–119 (FIAP…LDSF), 132–152 (VWMT…LGLL), and 164–184 (YSGA…LFPL).

Belongs to the MntP (TC 9.B.29) family.

The protein localises to the cell membrane. Probably functions as a manganese efflux pump. In Bacillus pumilus (strain SAFR-032), this protein is Putative manganese efflux pump MntP.